Here is a 602-residue protein sequence, read N- to C-terminus: Potassium-transporting ATPase potassium-binding subunit (602 aa).

A run of 10 helical transmembrane segments spans residues 3–23 (ANNL…AVPV), 64–84 (QYAL…YALL), 135–155 (GLTV…LALI), 178–198 (LYVL…QGVI), 282–302 (FSNF…CLVF), 313–333 (VAVL…ETSA), 418–438 (GLYG…LMIG), 456–476 (VSIV…IAVL), 522–542 (WMTA…VLAI), and 565–585 (LFVV…YMPA).

This sequence belongs to the KdpA family. The system is composed of three essential subunits: KdpA, KdpB and KdpC.

It is found in the cell inner membrane. Functionally, part of the high-affinity ATP-driven potassium transport (or Kdp) system, which catalyzes the hydrolysis of ATP coupled with the electrogenic transport of potassium into the cytoplasm. This subunit binds the periplasmic potassium ions and delivers the ions to the membrane domain of KdpB through an intramembrane tunnel. This chain is Potassium-transporting ATPase potassium-binding subunit, found in Burkholderia pseudomallei (strain K96243).